The primary structure comprises 238 residues: NAD-dependent protein deacylase (238 aa).

In terms of domain architecture, Deacetylase sirtuin-type spans 1–237; the sequence is MRGIMKVFVL…PAWVERLLAR (237 aa). 12–31 lines the NAD(+) pocket; it reads GAGVSAESGLGTFRDKDGVW. Substrate is bound by residues Tyr-56 and Arg-59. NAD(+) is bound at residue 94-97; the sequence is QNVD. His-112 functions as the Proton acceptor in the catalytic mechanism. The Zn(2+) site is built by Cys-120, Cys-123, Cys-139, and Cys-142. NAD(+) is bound by residues 179–181, 205–207, and Ala-223; these read GTS and NLE.

Belongs to the sirtuin family. Class III subfamily. It depends on Zn(2+) as a cofactor.

The protein resides in the cytoplasm. It catalyses the reaction N(6)-acetyl-L-lysyl-[protein] + NAD(+) + H2O = 2''-O-acetyl-ADP-D-ribose + nicotinamide + L-lysyl-[protein]. The enzyme catalyses N(6)-succinyl-L-lysyl-[protein] + NAD(+) + H2O = 2''-O-succinyl-ADP-D-ribose + nicotinamide + L-lysyl-[protein]. Functionally, NAD-dependent lysine deacetylase and desuccinylase that specifically removes acetyl and succinyl groups on target proteins. Modulates the activities of several proteins which are inactive in their acylated form. The protein is NAD-dependent protein deacylase of Caulobacter vibrioides (strain ATCC 19089 / CIP 103742 / CB 15) (Caulobacter crescentus).